Reading from the N-terminus, the 530-residue chain is Autoinducer-2 kinase (530 aa).

Belongs to the FGGY kinase family.

The protein resides in the cytoplasm. The catalysed reaction is (S)-4,5-dihydroxypentane-2,3-dione + ATP = (2S)-2-hydroxy-3,4-dioxopentyl phosphate + ADP + H(+). Its function is as follows. Catalyzes the phosphorylation of autoinducer-2 (AI-2) to phospho-AI-2, which subsequently inactivates the transcriptional regulator LsrR and leads to the transcription of the lsr operon. Phosphorylates the ring-open form of (S)-4,5-dihydroxypentane-2,3-dione (DPD), which is the precursor to all AI-2 signaling molecules, at the C5 position. This Salmonella paratyphi B (strain ATCC BAA-1250 / SPB7) protein is Autoinducer-2 kinase.